We begin with the raw amino-acid sequence, 247 residues long: Probable transcriptional regulatory protein DvMF_3201 (247 aa).

Residues 1-21 (MAGHSKWANIQHRKGRQDAKR) form a disordered region.

It belongs to the TACO1 family.

The protein localises to the cytoplasm. The protein is Probable transcriptional regulatory protein DvMF_3201 of Nitratidesulfovibrio vulgaris (strain DSM 19637 / Miyazaki F) (Desulfovibrio vulgaris).